A 767-amino-acid chain; its full sequence is Cullin-1 (767 aa).

One can recognise a Cullin neddylation domain in the interval 699–760 (DRKLLLQSAI…EKEYLERQGR (62 aa)). A Glycyl lysine isopeptide (Lys-Gly) (interchain with G-Cter in NEDD8) cross-link involves residue K713.

It belongs to the cullin family. Component of multiple Cul1-RING E3 ubiquitin-protein ligase complexes commonly known as SCF (SKP1-CUL1-F-box) complexes, consisting of cul1, skp1, pip1 and a variable F-box domain-containing protein as substrate-specific subunit. Binds to the pop1 homodimer, the pop2 homodimer and the pop1/pop2 heterodimer forming the SCF(pop1-pop2) complex. Interacts with pof3, pof14 and skp1. In terms of processing, neddylated; enhancing the ubiquitin-ligase activity.

It is found in the cytoplasm. It participates in protein modification; protein ubiquitination. Core component of multiple cullin-RING-based SCF (SKP1-CUL1-F-box protein) E3 ubiquitin-protein ligase complexes, which mediate the ubiquitination of target proteins. The functional specificity of the SCF complex depends on the F-box protein as substrate recognition component. SCF(pop1-pop2) is required for the maintenance of ploidy and directs ubiquitination of cig2. This Schizosaccharomyces pombe (strain 972 / ATCC 24843) (Fission yeast) protein is Cullin-1 (cul1).